Here is a 124-residue protein sequence, read N- to C-terminus: Large ribosomal subunit protein bL12 (124 aa).

Belongs to the bacterial ribosomal protein bL12 family. Homodimer. Part of the ribosomal stalk of the 50S ribosomal subunit. Forms a multimeric L10(L12)X complex, where L10 forms an elongated spine to which 2 to 4 L12 dimers bind in a sequential fashion. Binds GTP-bound translation factors.

Its function is as follows. Forms part of the ribosomal stalk which helps the ribosome interact with GTP-bound translation factors. Is thus essential for accurate translation. The chain is Large ribosomal subunit protein bL12 from Borreliella burgdorferi (strain ZS7) (Borrelia burgdorferi).